A 161-amino-acid polypeptide reads, in one-letter code: F-box only protein 48 (161 aa).

Residues 1-25 (MKKTSKKNNNFKIPGTELNSADAER) form a disordered region. One can recognise an F-box domain in the interval 32–79 (RNFVELLPLEVTYKIFSQLDIQSLCRASRTCTGWNCAIRNNDSLWKPH).

This is F-box only protein 48 (Fbxo48) from Mus musculus (Mouse).